A 205-amino-acid polypeptide reads, in one-letter code: ATP phosphoribosyltransferase (205 aa).

This sequence belongs to the ATP phosphoribosyltransferase family. Short subfamily. Heteromultimer composed of HisG and HisZ subunits.

Its subcellular location is the cytoplasm. It carries out the reaction 1-(5-phospho-beta-D-ribosyl)-ATP + diphosphate = 5-phospho-alpha-D-ribose 1-diphosphate + ATP. The protein operates within amino-acid biosynthesis; L-histidine biosynthesis; L-histidine from 5-phospho-alpha-D-ribose 1-diphosphate: step 1/9. Functionally, catalyzes the condensation of ATP and 5-phosphoribose 1-diphosphate to form N'-(5'-phosphoribosyl)-ATP (PR-ATP). Has a crucial role in the pathway because the rate of histidine biosynthesis seems to be controlled primarily by regulation of HisG enzymatic activity. The polypeptide is ATP phosphoribosyltransferase (Staphylococcus saprophyticus subsp. saprophyticus (strain ATCC 15305 / DSM 20229 / NCIMB 8711 / NCTC 7292 / S-41)).